Here is a 156-residue protein sequence, read N- to C-terminus: Small ribosomal subunit protein eS19A (156 aa).

Belongs to the eukaryotic ribosomal protein eS19 family.

The polypeptide is Small ribosomal subunit protein eS19A (RpS19a) (Drosophila melanogaster (Fruit fly)).